A 292-amino-acid chain; its full sequence is Peroxisomal 2,4-dienoyl-CoA reductase [(3E)-enoyl-CoA-producing] (292 aa).

NADP(+) contacts are provided by residues 35 to 40, 60 to 64, and aspartate 86; these read GGGSGI and RSLPR. Residue arginine 60 participates in substrate binding. Residues arginine 88, phenylalanine 118, and 126 to 128 each bind substrate; that span reads SFN. Lysine 151 carries the N6-acetyllysine modification. NADP(+)-binding positions include lysine 182 and 208–214; that span reads PGAISGT. A substrate-binding site is contributed by arginine 219. Phosphoserine is present on serine 287. A Microbody targeting signal motif is present at residues 290-292; the sequence is AKL. Lysine 291 carries the post-translational modification N6-acetyllysine.

Belongs to the short-chain dehydrogenases/reductases (SDR) family. 2,4-dienoyl-CoA reductase subfamily. In terms of assembly, monomer, dimer and oligomer.

Its subcellular location is the peroxisome. It catalyses the reaction a (2E,4Z)-dienoyl-CoA + NADPH + H(+) = a 4,5-saturated-(3E)-enoyl-CoA + NADP(+). The enzyme catalyses a (2E,4E)-dienoyl-CoA + NADPH + H(+) = a 4,5-saturated-(3E)-enoyl-CoA + NADP(+). It carries out the reaction (2E,4E)-hexadienoyl-CoA + NADPH + H(+) = (3E)-hexenoyl-CoA + NADP(+). The catalysed reaction is (2E,4E)-decadienoyl-CoA + NADPH + H(+) = (3E)-decenoyl-CoA + NADP(+). It catalyses the reaction (2E,4Z,7Z,10Z,13Z,16Z,19Z)-docosaheptaenoyl-CoA + NADPH + H(+) = (3E,7Z,10Z,13Z,16Z,19Z)-docosahexaenoyl-CoA + NADP(+). Its function is as follows. Auxiliary enzyme of beta-oxidation. Participates in the degradation of unsaturated fatty enoyl-CoA esters having double bonds in both even- and odd-numbered positions in peroxisome. Catalyzes the NADP-dependent reduction of 2,4-dienoyl-CoA to yield trans-3-enoyl-CoA. Has activity towards short and medium chain 2,4-dienoyl-CoAs, but also towards 2,4,7,10,13,16,19-docosaheptaenoyl-CoA, suggesting that it does not constitute a rate limiting step in the peroxisomal degradation of docosahexaenoic acid. The polypeptide is Peroxisomal 2,4-dienoyl-CoA reductase [(3E)-enoyl-CoA-producing] (Decr2) (Rattus norvegicus (Rat)).